Consider the following 553-residue polypeptide: CTP synthase (553 aa).

An amidoligase domain region spans residues 1–270 (MTKFVFVTGG…DRIICEELRI (270 aa)). Ser-13 is a binding site for CTP. Ser-13 serves as a coordination point for UTP. Residues 14-19 (SLGKGI) and Asp-71 contribute to the ATP site. Residues Asp-71 and Glu-144 each coordinate Mg(2+). CTP-binding positions include 151–153 (DIE), 191–196 (KTKPTQ), and Lys-227. UTP contacts are provided by residues 191-196 (KTKPTQ) and Lys-227. A Glutamine amidotransferase type-1 domain is found at 295-547 (TIGMVGKYVD…VEAALAHQQN (253 aa)). Gly-356 lines the L-glutamine pocket. The active-site Nucleophile; for glutamine hydrolysis is the Cys-383. L-glutamine-binding positions include 384–387 (LGMQ), Glu-407, and Arg-473. Catalysis depends on residues His-520 and Glu-522.

This sequence belongs to the CTP synthase family. In terms of assembly, homotetramer.

The catalysed reaction is UTP + L-glutamine + ATP + H2O = CTP + L-glutamate + ADP + phosphate + 2 H(+). It catalyses the reaction L-glutamine + H2O = L-glutamate + NH4(+). The enzyme catalyses UTP + NH4(+) + ATP = CTP + ADP + phosphate + 2 H(+). It participates in pyrimidine metabolism; CTP biosynthesis via de novo pathway; CTP from UDP: step 2/2. Allosterically activated by GTP, when glutamine is the substrate; GTP has no effect on the reaction when ammonia is the substrate. The allosteric effector GTP functions by stabilizing the protein conformation that binds the tetrahedral intermediate(s) formed during glutamine hydrolysis. Inhibited by the product CTP, via allosteric rather than competitive inhibition. Functionally, catalyzes the ATP-dependent amination of UTP to CTP with either L-glutamine or ammonia as the source of nitrogen. Regulates intracellular CTP levels through interactions with the four ribonucleotide triphosphates. This chain is CTP synthase, found in Ralstonia pickettii (strain 12J).